Here is a 697-residue protein sequence, read N- to C-terminus: DNA ligase (697 aa).

NAD(+) contacts are provided by residues 34-38 (DKTYD), 83-84 (SL), and Glu-114. Lys-116 (N6-AMP-lysine intermediate) is an active-site residue. Positions 137, 171, 315, and 339 each coordinate NAD(+). Zn(2+) contacts are provided by Cys-430, Cys-433, Cys-448, and Cys-453. The BRCT domain occupies 616 to 697 (KKSSKLNNLN…FHNLLKEENA (82 aa)).

It belongs to the NAD-dependent DNA ligase family. LigA subfamily. Mg(2+) serves as cofactor. Requires Mn(2+) as cofactor.

The catalysed reaction is NAD(+) + (deoxyribonucleotide)n-3'-hydroxyl + 5'-phospho-(deoxyribonucleotide)m = (deoxyribonucleotide)n+m + AMP + beta-nicotinamide D-nucleotide.. DNA ligase that catalyzes the formation of phosphodiester linkages between 5'-phosphoryl and 3'-hydroxyl groups in double-stranded DNA using NAD as a coenzyme and as the energy source for the reaction. It is essential for DNA replication and repair of damaged DNA. The chain is DNA ligase from Mycoplasmopsis synoviae (strain 53) (Mycoplasma synoviae).